The following is a 371-amino-acid chain: Dual-specificity RNA methyltransferase RlmN (371 aa).

E92 functions as the Proton acceptor in the catalytic mechanism. Residues 98–337 (EADRATLCVS…VTVRKTRGDD (240 aa)) form the Radical SAM core domain. The cysteines at positions 105 and 342 are disulfide-linked. Positions 112, 116, and 119 each coordinate [4Fe-4S] cluster. S-adenosyl-L-methionine contacts are provided by residues 166–167 (GE), S198, 220–222 (SLH), and N299. The active-site S-methylcysteine intermediate is the C342.

The protein belongs to the radical SAM superfamily. RlmN family. [4Fe-4S] cluster is required as a cofactor.

The protein localises to the cytoplasm. The enzyme catalyses adenosine(2503) in 23S rRNA + 2 reduced [2Fe-2S]-[ferredoxin] + 2 S-adenosyl-L-methionine = 2-methyladenosine(2503) in 23S rRNA + 5'-deoxyadenosine + L-methionine + 2 oxidized [2Fe-2S]-[ferredoxin] + S-adenosyl-L-homocysteine. It carries out the reaction adenosine(37) in tRNA + 2 reduced [2Fe-2S]-[ferredoxin] + 2 S-adenosyl-L-methionine = 2-methyladenosine(37) in tRNA + 5'-deoxyadenosine + L-methionine + 2 oxidized [2Fe-2S]-[ferredoxin] + S-adenosyl-L-homocysteine. Its function is as follows. Specifically methylates position 2 of adenine 2503 in 23S rRNA and position 2 of adenine 37 in tRNAs. m2A2503 modification seems to play a crucial role in the proofreading step occurring at the peptidyl transferase center and thus would serve to optimize ribosomal fidelity. In Actinobacillus succinogenes (strain ATCC 55618 / DSM 22257 / CCUG 43843 / 130Z), this protein is Dual-specificity RNA methyltransferase RlmN.